The sequence spans 166 residues: Protein YciF (166 aa).

Homodimer.

The sequence is that of Protein YciF (yciF) from Escherichia coli (strain K12).